The sequence spans 374 residues: P2Y purinoceptor 11 (374 aa).

The Extracellular portion of the chain corresponds to 1 to 29; it reads MAANVSGAKSCPANFLAAADDKLSGFQGD. N-linked (GlcNAc...) asparagine glycosylation is present at asparagine 4. A helical membrane pass occupies residues 30–50; sequence FLWPILVVEFLVAVASNGLAL. Over 51-64 the chain is Cytoplasmic; sequence YRFSIRKQRPWHPA. A helical membrane pass occupies residues 65 to 85; sequence VVFSVQLAVSDLLCALTLPPL. The Extracellular portion of the chain corresponds to 86–116; sequence AAYLYPPKHWRYGEAACRLERFLFTCNLLGS. Cysteines 102 and 180 form a disulfide. Residues 117–137 traverse the membrane as a helical segment; the sequence is VIFITCISLNRYLGIVHPFFA. Topologically, residues 138 to 146 are cytoplasmic; it reads RSHLRPKHA. A helical membrane pass occupies residues 147–167; the sequence is WAVSAAGWVLAALLAMPTLSF. The Extracellular segment spans residues 168–206; sequence SHLKRPQQGAGNCSVARPEACIKCLGTADHGLAAYRAYS. Asparagine 179 carries N-linked (GlcNAc...) asparagine glycosylation. A helical transmembrane segment spans residues 207-227; the sequence is LVLAGLGCGLPLLLTLAAYGA. Residues 228–245 are Cytoplasmic-facing; the sequence is LGRAVLRSPGMTVAEKLR. A helical transmembrane segment spans residues 246 to 266; it reads VAALVASGVALYASSYVPYHI. At 267–308 the chain is on the extracellular side; it reads MRVLNVDARRRWSTRCPSFADIAQATAALELGPYVGYQVMRG. A helical membrane pass occupies residues 309 to 329; the sequence is LMPLAFCVHPLLYMAAVPSLG. Over 330–374 the chain is Cytoplasmic; that stretch reads CCCRHCPGYRDSWNPEDAKSTGQALPLNATAAPKPSEPQSRELSQ. The disordered stretch occupies residues 345-374; the sequence is EDAKSTGQALPLNATAAPKPSEPQSRELSQ.

Belongs to the G-protein coupled receptor 1 family. Highest expression in liver and spleen.

It is found in the cell membrane. In terms of biological role, receptor for ATP and ADP coupled to G-proteins that activate both phosphatidylinositol-calcium and adenylyl cyclase second messenger systems. Not activated by UTP or UDP. The protein is P2Y purinoceptor 11 (P2RY11) of Homo sapiens (Human).